The sequence spans 207 residues: Guanylate kinase (207 aa).

The 181-residue stretch at 4–184 (GTLYIVSAPS…ALSDLKTIIR (181 aa)) folds into the Guanylate kinase-like domain. 11-18 (APSGAGKS) is an ATP binding site.

This sequence belongs to the guanylate kinase family.

The protein localises to the cytoplasm. It catalyses the reaction GMP + ATP = GDP + ADP. The catalysed reaction is dZMP + ATP = dZDP + ADP. The protein operates within purine metabolism. Essential for recycling GMP and indirectly, cGMP. In terms of biological role, (Microbial infection) Catalyzes the phosphorylation of dZMP to dZDP, when the bacterium is infected by a phage that produces the substrate for the synthesis of dZTP (2- amino-2'-deoxyadenosine 5'-triphosphate), which is then used by the phage as a DNA polymerase substrate. This Salmonella choleraesuis (strain SC-B67) protein is Guanylate kinase.